The chain runs to 494 residues: 4-hydroxyphenylacetate 3-monooxygenase oxygenase component (494 aa).

Residues Arg-103–Tyr-107 and His-149 contribute to the substrate site. FAD-binding positions include His-149 to Leu-151, Gln-155 to Arg-158, and Thr-192. Ser-205–Thr-206 contributes to the substrate binding site. Residue Asp-455–Arg-458 coordinates FAD.

The protein belongs to the FADH(2)-utilizing monooxygenase family. In terms of assembly, 4-HPA 3-monooxygenase consists of a reductase component HpaI and an oxygenase component HpaH.

It carries out the reaction 4-hydroxyphenylacetate + FADH2 + O2 = 3,4-dihydroxyphenylacetate + FAD + H2O + H(+). It functions in the pathway aromatic compound metabolism; 4-hydroxyphenylacetate degradation; pyruvate and succinate semialdehyde from 4-hydroxyphenylacetate: step 1/7. In terms of biological role, utilizes FADH(2) supplied by HpaI, to catalyze the hydroxylation of 4-hydroxyphenylacetic acid, leading to the production of 3,4-dihydroxyphenylacetic acid (DHPA). The sequence is that of 4-hydroxyphenylacetate 3-monooxygenase oxygenase component (hpaH) from Geobacillus sp. (strain PA-9).